Reading from the N-terminus, the 476-residue chain is MTKQYKNYVNGEWKLSKEEIKIYAPATGEELGSVPAMSQEEVDYVYASAKAAQKAWRALSYVERAEYLHKAADILMRDAEKIGAVLSKEIAKGYKSAVGEVIRTAEIINYAAEEGVRLEGEVLEGGSFDPASKKKIAIVRREPVGLVLAISPFNYPINLAGSKIAPALISGNVVALKPPTQGSISGLLLAEAFAEAGLPAGVFNTITGRGSVIGDYIVEHEAVNYINFTGSTPVGEHIGHLAGMRPIMLELGGKDSAIILEDADLDLAAKNIVAGAYGYSGQRCTAVKRVLVMDSIADKLVEKVSALVNNLTVGMPEDNADITPLIDTKAADYVEGLIKDAQEKGAKEVISFKREGNLISPVLFDNVTTDMRLAWEEPFGPVLPFIRVNSVEEAIEISNKSEYGLQASVFTNNFPLAFKIAEQLEVGTVHINNKTQRGTDNFPFLGAKKSGAGVQGVKYSIEAMTTVKSTVFDIAK.

Arg-103 serves as a coordination point for substrate. Ser-151 is a binding site for NADP(+). A substrate-binding site is contributed by 154–155 (NY). Residues Lys-177, Thr-180, Asp-215, and 230-251 (GSTPVGEHIGHLAGMRPIMLEL) contribute to the NADP(+) site. Residues Glu-250 and Cys-284 contribute to the active site. 283–285 (RCT) serves as a coordination point for substrate. Glu-377 is an NADP(+) binding site. Arg-437 provides a ligand contact to substrate.

Belongs to the aldehyde dehydrogenase family. Homotetramer.

The catalysed reaction is D-glyceraldehyde 3-phosphate + NADP(+) + H2O = (2R)-3-phosphoglycerate + NADPH + 2 H(+). Catalyzes the irreversible NADP-dependent oxidation of glyceraldehyde-3-phosphate to 3-phosphoglycerate. Is not able to use NAD instead of NADP. May play an important role in NADPH production in S.equinus. This Streptococcus equinus (Streptococcus bovis) protein is NADP-dependent glyceraldehyde-3-phosphate dehydrogenase (gapN).